The following is an 81-amino-acid chain: uncharacterized protein (81 aa).

The N-terminal stretch at 1–24 (MRKILKIVSLLILLLLLVYSFFSP) is a signal peptide. At 25–28 (NSQL) the chain is on the extracellular side. The helical transmembrane segment at 29 to 49 (FVFVQLIIIAFLIGFGINCFV) threads the bilayer. The Cytoplasmic segment spans residues 50–81 (KKERYQGTLYFVIAICNITINLDKINELIQSI).

It localises to the cell membrane. This is an uncharacterized protein from Bacillus subtilis (strain 168).